A 1177-amino-acid chain; its full sequence is Lysylphosphatidylglycerol biosynthesis bifunctional protein LysX (1177 aa).

Disordered regions lie at residues 1-40 (MRRA…AKFV) and 61-85 (VTLA…PRNR). The phosphatidylglycerol lysyltransferase stretch occupies residues 1 to 676 (MRRAGRSRQF…LLHHDGSAPD (676 aa)). The segment covering 65–85 (SPGSRSGSGPRSGPRLGPRNR) has biased composition (low complexity). A run of 6 helical transmembrane segments spans residues 93 to 113 (VPAA…LGSV), 135 to 155 (FPDT…ALTA), 159 to 179 (IAWL…VADI), 189 to 209 (IFGE…LVLA), 227 to 247 (AVLV…VELF), and 281 to 301 (VFLN…ATIV). Residues 673-693 (SAPDVSGLRPERTDAEEARSR) are disordered. Residues 677–1177 (VSGLRPERTD…TLPFPLAKPH (501 aa)) are lysine--tRNA ligase. A compositionally biased stretch (basic and acidic residues) spans 681 to 693 (RPERTDAEEARSR). A DNA-binding region (OB) is located at residues 738-816 (ITVAGRILRI…SLIVTDWRMI (79 aa)). Positions 1089 and 1096 each coordinate Mg(2+).

It in the N-terminal section; belongs to the LPG synthetase family. The protein in the C-terminal section; belongs to the class-II aminoacyl-tRNA synthetase family. Mg(2+) serves as cofactor.

It localises to the cell membrane. The catalysed reaction is tRNA(Lys) + L-lysine + ATP = L-lysyl-tRNA(Lys) + AMP + diphosphate. The enzyme catalyses L-lysyl-tRNA(Lys) + a 1,2-diacyl-sn-glycero-3-phospho-(1'-sn-glycerol) = a 1,2-diacyl-sn-glycero-3-phospho-1'-(3'-O-L-lysyl)-sn-glycerol + tRNA(Lys). Its function is as follows. Catalyzes the production of L-lysyl-tRNA(Lys)transfer and the transfer of a lysyl group from L-lysyl-tRNA(Lys) to membrane-bound phosphatidylglycerol (PG), which produces lysylphosphatidylglycerol (LPG), one of the components of the bacterial membrane with a positive net charge. LPG synthesis contributes to the resistance to cationic antimicrobial peptides (CAMPs) and likely protects M.tuberculosis against the CAMPs produced by competiting microorganisms (bacteriocins). In fact, the modification of anionic phosphatidylglycerol with positively charged L-lysine results in repulsion of the peptides. The chain is Lysylphosphatidylglycerol biosynthesis bifunctional protein LysX (lysX) from Mycolicibacterium paratuberculosis (strain ATCC BAA-968 / K-10) (Mycobacterium paratuberculosis).